Consider the following 771-residue polypeptide: Probable exo-1,4-beta-xylosidase xlnD (771 aa).

Residues 1 to 25 form the signal peptide; it reads MARIMSWHYGKAITLFVCLGPVALS. N67 carries an N-linked (GlcNAc...) asparagine glycan. D293 is a catalytic residue. Residues N305, N345, N423, and N464 are each glycosylated (N-linked (GlcNAc...) asparagine).

Belongs to the glycosyl hydrolase 3 family.

The protein resides in the secreted. The enzyme catalyses Hydrolysis of (1-&gt;4)-beta-D-xylans, to remove successive D-xylose residues from the non-reducing termini.. It functions in the pathway glycan degradation; xylan degradation. In terms of biological role, xylan 1,4-beta-xylosidase involved in the hydrolysis of xylan, a major structural heterogeneous polysaccharide found in plant biomass representing the second most abundant polysaccharide in the biosphere, after cellulose. In Neosartorya fischeri (strain ATCC 1020 / DSM 3700 / CBS 544.65 / FGSC A1164 / JCM 1740 / NRRL 181 / WB 181) (Aspergillus fischerianus), this protein is Probable exo-1,4-beta-xylosidase xlnD (xlnD).